Reading from the N-terminus, the 119-residue chain is MVKLAFSRELRLLTPAHFTFVFQQPQRAGTPQITILGRLNSLGHPRIGLTVAKKNVRRAHERNRIKRLTRESFRLRQHELPAMDFVVVAKKGVADLDNRALSEALEKLWRRHCRLARGS.

This sequence belongs to the RnpA family. As to quaternary structure, consists of a catalytic RNA component (M1 or rnpB) and a protein subunit.

It carries out the reaction Endonucleolytic cleavage of RNA, removing 5'-extranucleotides from tRNA precursor.. Its function is as follows. RNaseP catalyzes the removal of the 5'-leader sequence from pre-tRNA to produce the mature 5'-terminus. It can also cleave other RNA substrates such as 4.5S RNA. The protein component plays an auxiliary but essential role in vivo by binding to the 5'-leader sequence and broadening the substrate specificity of the ribozyme. The protein is Ribonuclease P protein component of Salmonella paratyphi A (strain AKU_12601).